A 289-amino-acid chain; its full sequence is MSRTFLKMNGLGNDFVVIETLTQPFHPTAEEIRAIAKRPNAKEGEGGIGCDQVIAIDPPRAEGASAYVRFWNSDGEETGACGNGTRCVAWLLMQSGQKDSVAFDTVAGRLSGKMAGDKLVTVDMGQPGLAWNQIPLAEEMDTVGIELQVGPIDAPLVHTPGCVSMGNPHVVFFVDAPVSDAFARGTGSLVEHHPLFPEGVNVGFAHIAARDHIKLKVWERGAGLTAACGTGACAAQVAAVRRGLTDRVAKVEFESGALTIEWREADGHVIMTGPVTMEFVGKLPEKVAA.

Residues Asn-13, Gln-52, and Asn-72 each coordinate substrate. Cys-81 serves as the catalytic Proton donor. Residues 82–83 (GN), Asn-167, Asn-201, and 219–220 (ER) each bind substrate. Cys-228 functions as the Proton acceptor in the catalytic mechanism. 229 to 230 (GT) is a substrate binding site.

Belongs to the diaminopimelate epimerase family. In terms of assembly, homodimer.

It is found in the cytoplasm. The catalysed reaction is (2S,6S)-2,6-diaminopimelate = meso-2,6-diaminopimelate. The protein operates within amino-acid biosynthesis; L-lysine biosynthesis via DAP pathway; DL-2,6-diaminopimelate from LL-2,6-diaminopimelate: step 1/1. Its function is as follows. Catalyzes the stereoinversion of LL-2,6-diaminopimelate (L,L-DAP) to meso-diaminopimelate (meso-DAP), a precursor of L-lysine and an essential component of the bacterial peptidoglycan. The sequence is that of Diaminopimelate epimerase from Caulobacter sp. (strain K31).